The sequence spans 192 residues: Erythropoietin (192 aa).

An N-terminal signal peptide occupies residues 1–26 (MGSCECPALLLLLSLLLLPLGLPVLG). 2 disulfides stabilise this stretch: cysteine 33/cysteine 187 and cysteine 55/cysteine 59. A glycan (N-linked (GlcNAc...) asparagine) is linked at asparagine 50. N-linked (GlcNAc...) asparagine glycosylation is found at asparagine 64 and asparagine 109.

This sequence belongs to the EPO/TPO family. In terms of tissue distribution, produced by kidney or liver of adult mammals and by liver of fetal or neonatal mammals.

The protein resides in the secreted. Hormone involved in the regulation of erythrocyte proliferation and differentiation and the maintenance of a physiological level of circulating erythrocyte mass. Binds to EPOR leading to EPOR dimerization and JAK2 activation thereby activating specific downstream effectors, including STAT1 and STAT3. The protein is Erythropoietin (EPO) of Felis catus (Cat).